A 1388-amino-acid polypeptide reads, in one-letter code: Rho-associated protein kinase 2 (1388 aa).

A disordered region spans residues 1-24 (MSRPPPTGKMPGAPEAAAGDGAGA). In terms of domain architecture, Protein kinase spans 92–354 (YDVVKVIGRG…VEEIKSASFF (263 aa)). Residues 98-106 (IGRGAFGEV) and K121 contribute to the ATP site. The active-site Proton acceptor is the D214. Residues 357-425 (DQWNWDNIRE…FRENLLLSDS (69 aa)) form the AGC-kinase C-terminal domain. The interval 363-784 (NIRETAAPVV…LNELLKQKDV (422 aa)) is interaction with PPP1R12A. The segment at 373–420 (PELSSDIDSSNFDDIEDDKGDVETFPIPKAFVGNQLPFIGFTYFRENL) is interaction with NPM1. Phosphothreonine; by ROCK2 is present on T414. Coiled-coil stretches lie at residues 439–1024 (SEES…EKQL) and 1052–1131 (SDTD…IGMD). Residues 497 to 573 (TLRQLEREKA…LDEANALLRT (77 aa)) form the REM-1 domain. A compositionally biased stretch (basic and acidic residues) spans 513–530 (AEYQRKADHEADKKRNLE). Residues 513–532 (AEYQRKADHEADKKRNLEND) form a disordered region. Y722 carries the post-translational modification Phosphotyrosine; by SRC. Residues 979-1047 (TSDVANLANE…LAEIMNRKEP (69 aa)) form the RhoBD domain. The tract at residues 979–1047 (TSDVANLANE…LAEIMNRKEP (69 aa)) is RHOA binding. Position 1137 is a phosphoserine (S1137). The PH domain maps to 1150–1349 (ESRLEGWLSL…WVSRLVKKIP (200 aa)). T1212 carries the post-translational modification Phosphothreonine. The Phorbol-ester/DAG-type zinc finger occupies 1260–1315 (GHEFIPTLYHFPTNCEACMKPLWHMFKPPPALECSRCHIKCHKDHMDKKEEIIAPC). A disordered region spans residues 1345–1388 (VKKIPKKPPAPDPFARSSPRTSMKIQQNQSIRRPSRQLAPNKPS). Phosphoserine is present on residues S1362 and S1374. Residues 1362-1376 (SPRTSMKIQQNQSIR) show a composition bias toward polar residues.

This sequence belongs to the protein kinase superfamily. AGC Ser/Thr protein kinase family. As to quaternary structure, homodimer. Interacts with IRS1. Interacts with RAF1. Interacts with RHOA (activated by GTP), RHOB, RHOC. Interacts with PPP1R12A. Interacts with EP300. Interacts with CHORDC1. Interacts with BRCA2. Interacts with NPM1; this interaction enhances its activity. Interacts with SORL1. Interacts with PJVK. Mg(2+) is required as a cofactor. Post-translationally, autophosphorylated. Phosphorylation at Tyr-722 reduces its binding to RHOA and is crucial for focal adhesion dynamics. Dephosphorylation by PTPN11 stimulates its RHOA binding activity. In terms of processing, cleaved by granzyme B during apoptosis. This leads to constitutive activation of the kinase and membrane blebbing. Highly expressed in brain, lung, liver, skeletal muscle, kidney and testis.

The protein resides in the cytoplasm. It localises to the cell membrane. Its subcellular location is the nucleus. It is found in the cytoskeleton. The protein localises to the microtubule organizing center. The protein resides in the centrosome. The enzyme catalyses L-seryl-[protein] + ATP = O-phospho-L-seryl-[protein] + ADP + H(+). It carries out the reaction L-threonyl-[protein] + ATP = O-phospho-L-threonyl-[protein] + ADP + H(+). Activated by RHOA binding. Inhibited by Y-27632. Protein kinase which is a key regulator of actin cytoskeleton and cell polarity. Involved in regulation of smooth muscle contraction, actin cytoskeleton organization, stress fiber and focal adhesion formation, neurite retraction, cell adhesion and motility via phosphorylation of ADD1, BRCA2, CNN1, EZR, DPYSL2, EP300, MSN, MYL9/MLC2, NPM1, RDX, PPP1R12A and VIM. Phosphorylates SORL1 and IRF4. Acts as a negative regulator of VEGF-induced angiogenic endothelial cell activation. Positively regulates the activation of p42/MAPK1-p44/MAPK3 and of p90RSK/RPS6KA1 during myogenic differentiation. Plays an important role in the timely initiation of centrosome duplication. Inhibits keratinocyte terminal differentiation. May regulate closure of the eyelids and ventral body wall through organization of actomyosin bundles. Plays a critical role in the regulation of spine and synaptic properties in the hippocampus. Plays a role in placental homeostasis during the perinatal period. Plays an important role in generating the circadian rhythm of the aortic myofilament Ca(2+) sensitivity and vascular contractility by modulating the myosin light chain phosphorylation. The protein is Rho-associated protein kinase 2 (Rock2) of Rattus norvegicus (Rat).